A 712-amino-acid polypeptide reads, in one-letter code: Polyribonucleotide nucleotidyltransferase (712 aa).

Positions 484 and 490 each coordinate Mg(2+). The KH domain maps to 550 to 609 (PKYKTMDVNPEKIRVLIGPGGKNIKAIIEETGSDVEIQDSGVVNIFAPDTPTLDKTIKLI). The S1 motif domain occupies 619 to 686 (GEVYDGIVKD…KGGKYSLSRK (68 aa)).

This sequence belongs to the polyribonucleotide nucleotidyltransferase family. Mg(2+) is required as a cofactor.

The protein resides in the cytoplasm. The enzyme catalyses RNA(n+1) + phosphate = RNA(n) + a ribonucleoside 5'-diphosphate. Its function is as follows. Involved in mRNA degradation. Catalyzes the phosphorolysis of single-stranded polyribonucleotides processively in the 3'- to 5'-direction. The protein is Polyribonucleotide nucleotidyltransferase of Brachyspira hyodysenteriae (strain ATCC 49526 / WA1).